The primary structure comprises 554 residues: Phenylalanine--tRNA ligase beta subunit (554 aa).

In terms of domain architecture, B5 spans 276–351; the sequence is LTLKSRIISI…INYGYEKFEG (76 aa). Aspartate 329, aspartate 335, glutamate 338, and glutamate 339 together coordinate Mg(2+).

Belongs to the phenylalanyl-tRNA synthetase beta subunit family. Type 2 subfamily. In terms of assembly, tetramer of two alpha and two beta subunits. Mg(2+) serves as cofactor.

Its subcellular location is the cytoplasm. It carries out the reaction tRNA(Phe) + L-phenylalanine + ATP = L-phenylalanyl-tRNA(Phe) + AMP + diphosphate + H(+). This Methanococcus maripaludis (strain C7 / ATCC BAA-1331) protein is Phenylalanine--tRNA ligase beta subunit.